Consider the following 554-residue polypeptide: Myo-inositol transporter 1 (554 aa).

Polar residues predominate over residues 1–13; it reads MGSSTNNTQSKAT. The tract at residues 1–57 is disordered; that stretch reads MGSSTNNTQSKATPSVLENEVNSSKSSVVSSTSSAKGLLRETTNHGTMETSSVQISE. Residues Asn6 and Asn22 are each glycosylated (N-linked (GlcNAc...) asparagine). The span at 15–34 shows a compositional bias: low complexity; the sequence is SVLENEVNSSKSSVVSSTSS. Over residues 44–57 the composition is skewed to polar residues; that stretch reads NHGTMETSSVQISE. Transmembrane regions (helical) follow at residues 65 to 85, 110 to 130, 144 to 164, 167 to 187, 196 to 216, and 227 to 247; these read MVLV…YDTG, FITS…GVLA, IIFV…TMIA, FVLG…ISEL, LIVT…FINW, and VSVG…WFLP. The N-linked (GlcNAc...) asparagine glycan is linked to Asn279. Residues 313 to 332 traverse the membrane as a helical segment; it reads GNFRALILACGLQGIQQFTG. N-linked (GlcNAc...) asparagine glycosylation occurs at Asn351. 5 helical membrane passes run 354–374, 382–402, 420–440, 459–479, and 490–510; these read AVSI…ICII, ILLV…VAFH, GWGI…AIGI, IGAM…ASTF, and GTFS…YFLL.

The protein belongs to the major facilitator superfamily. Sugar transporter (TC 2.A.1.1) family.

The protein resides in the cell membrane. It catalyses the reaction myo-inositol(out) + H(+)(out) = myo-inositol(in) + H(+)(in). Functionally, major transporter for myo-inositol. This is Myo-inositol transporter 1 from Candida albicans (strain SC5314 / ATCC MYA-2876) (Yeast).